The chain runs to 100 residues: Urease subunit gamma (100 aa).

The protein belongs to the urease gamma subunit family. As to quaternary structure, heterotrimer of UreA (gamma), UreB (beta) and UreC (alpha) subunits. Three heterotrimers associate to form the active enzyme.

The protein resides in the cytoplasm. It carries out the reaction urea + 2 H2O + H(+) = hydrogencarbonate + 2 NH4(+). It participates in nitrogen metabolism; urea degradation; CO(2) and NH(3) from urea (urease route): step 1/1. This chain is Urease subunit gamma, found in Paraburkholderia xenovorans (strain LB400).